The sequence spans 358 residues: Uroporphyrinogen decarboxylase (358 aa).

Substrate-binding positions include 27 to 31 (RQAGR), Asp-77, Tyr-154, Ser-209, and His-330.

This sequence belongs to the uroporphyrinogen decarboxylase family. Homodimer.

Its subcellular location is the cytoplasm. It carries out the reaction uroporphyrinogen III + 4 H(+) = coproporphyrinogen III + 4 CO2. Its pathway is porphyrin-containing compound metabolism; protoporphyrin-IX biosynthesis; coproporphyrinogen-III from 5-aminolevulinate: step 4/4. Catalyzes the decarboxylation of four acetate groups of uroporphyrinogen-III to yield coproporphyrinogen-III. The chain is Uroporphyrinogen decarboxylase from Acinetobacter baylyi (strain ATCC 33305 / BD413 / ADP1).